The primary structure comprises 327 residues: Neurogenic differentiation factor 6-A (327 aa).

The segment at 17–85 (GANFPRDCVG…KKMTKARVDR (69 aa)) is disordered. The span at 24–46 (CVGDLKGNKQEPFEKEETLSHVM) shows a compositional bias: basic and acidic residues. The segment covering 47-63 (DDDDSEKDEDEREDGQD) has biased composition (acidic residues). Positions 68 to 80 (PRRRGPRKKKMTK) are enriched in basic residues. Residues 74-80 (RKKKMTK) carry the Nuclear localization signal motif. The bHLH domain occupies 88-140 (VRRMEANARERNRMHGLNNALDSLRKVVPCYSKTQKLSKIETLRLAKNYIWAL).

Efficient DNA binding requires dimerization with another bHLH protein. Embryonic olfactory bulbs. In adult, expressed in brain, eye, intestine, muscle, ovary and skin.

It localises to the nucleus. Functionally, differentiation factor required for neurogenesis. Acts as an upstream activator of isl1. In Danio rerio (Zebrafish), this protein is Neurogenic differentiation factor 6-A.